A 302-amino-acid chain; its full sequence is Oxygen-dependent coproporphyrinogen-III oxidase (302 aa).

S94 lines the substrate pocket. A divalent metal cation contacts are provided by H98 and H108. Residue H108 is the Proton donor of the active site. 110–112 (NVR) provides a ligand contact to substrate. H147 and H177 together coordinate a divalent metal cation. Residues 242–277 (YVEFNLVWDRGTLFGLQSGGRTESILMSMPPLARWE) form an important for dimerization region. 260 to 262 (GGR) lines the substrate pocket.

This sequence belongs to the aerobic coproporphyrinogen-III oxidase family. As to quaternary structure, homodimer. A divalent metal cation serves as cofactor.

It is found in the cytoplasm. The catalysed reaction is coproporphyrinogen III + O2 + 2 H(+) = protoporphyrinogen IX + 2 CO2 + 2 H2O. The protein operates within porphyrin-containing compound metabolism; protoporphyrin-IX biosynthesis; protoporphyrinogen-IX from coproporphyrinogen-III (O2 route): step 1/1. Functionally, involved in the heme biosynthesis. Catalyzes the aerobic oxidative decarboxylation of propionate groups of rings A and B of coproporphyrinogen-III to yield the vinyl groups in protoporphyrinogen-IX. The polypeptide is Oxygen-dependent coproporphyrinogen-III oxidase (Photorhabdus laumondii subsp. laumondii (strain DSM 15139 / CIP 105565 / TT01) (Photorhabdus luminescens subsp. laumondii)).